The chain runs to 144 residues: Large ribosomal subunit protein uL13 (144 aa).

The protein belongs to the universal ribosomal protein uL13 family. In terms of assembly, part of the 50S ribosomal subunit.

Functionally, this protein is one of the early assembly proteins of the 50S ribosomal subunit, although it is not seen to bind rRNA by itself. It is important during the early stages of 50S assembly. In Mycoplasma mobile (strain ATCC 43663 / 163K / NCTC 11711) (Mesomycoplasma mobile), this protein is Large ribosomal subunit protein uL13.